A 563-amino-acid polypeptide reads, in one-letter code: Arylsulfatase K (563 aa).

The first 17 residues, 1 to 17, serve as a signal peptide directing secretion; it reads MLLLLVSVIVALALVAP. Ca(2+)-binding residues include Asp-40 and Cys-80. Catalysis depends on Cys-80, which acts as the Nucleophile. Cys-80 is subject to 3-oxoalanine (Cys). N-linked (GlcNAc...) asparagine glycosylation is present at Asn-108. Lys-128 is a substrate binding site. Asn-191 carries an N-linked (GlcNAc...) asparagine glycan. His-249 lines the substrate pocket. N-linked (GlcNAc...) asparagine glycosylation occurs at Asn-260. 2 residues coordinate Ca(2+): Asp-311 and His-312. 3 N-linked (GlcNAc...) asparagine glycosylation sites follow: Asn-373, Asn-411, and Asn-496.

Belongs to the sulfatase family. The cofactor is Ca(2+). In terms of processing, the conversion to 3-oxoalanine (also known as C-formylglycine, FGly), of a serine or cysteine residue in prokaryotes and of a cysteine residue in eukaryotes, is critical for catalytic activity. The 75-kDa precursor undergoes proteolytic processing to yield a 23 kDa form. Post-translationally, N-glycosylated with both high mannose and complex type sugars.

The protein localises to the secreted. Its subcellular location is the lysosome. The enzyme catalyses an aryl sulfate + H2O = a phenol + sulfate + H(+). It catalyses the reaction Hydrolysis of the 2-sulfate groups of the 2-O-sulfo-D-glucuronate residues of chondroitin sulfate, heparin and heparitin sulfate.. Its function is as follows. Catalyzes the hydrolysis of pseudosubstrates such as p-nitrocatechol sulfate and p-nitrophenyl sulfate. Catalyzes the hydrolysis of the 2-sulfate groups of the 2-O-sulfo-D-glucuronate residues of chondroitin sulfate, heparin and heparitin sulfate. Acts selectively on 2-sulfoglucuronate and lacks activity against 2-sulfoiduronate. The chain is Arylsulfatase K (Arsk) from Rattus norvegicus (Rat).